The following is a 374-amino-acid chain: S-adenosylmethionine:tRNA ribosyltransferase-isomerase (374 aa).

Belongs to the QueA family. In terms of assembly, monomer.

The protein localises to the cytoplasm. It catalyses the reaction 7-aminomethyl-7-carbaguanosine(34) in tRNA + S-adenosyl-L-methionine = epoxyqueuosine(34) in tRNA + adenine + L-methionine + 2 H(+). The protein operates within tRNA modification; tRNA-queuosine biosynthesis. Transfers and isomerizes the ribose moiety from AdoMet to the 7-aminomethyl group of 7-deazaguanine (preQ1-tRNA) to give epoxyqueuosine (oQ-tRNA). The sequence is that of S-adenosylmethionine:tRNA ribosyltransferase-isomerase from Prochlorococcus marinus (strain MIT 9215).